A 414-amino-acid chain; its full sequence is S-adenosylmethionine synthase (414 aa).

Histidine 11 is a binding site for ATP. Aspartate 13 serves as a coordination point for Mg(2+). K(+) is bound at residue glutamate 39. Glutamate 52 and glutamine 95 together coordinate L-methionine. Positions 95-105 (QSPDIAQGVNL) are flexible loop. ATP is bound by residues 169 to 171 (DGK), 245 to 246 (KF), aspartate 254, 260 to 261 (RK), alanine 277, and lysine 281. Aspartate 254 provides a ligand contact to L-methionine. Lysine 285 serves as a coordination point for L-methionine.

The protein belongs to the AdoMet synthase family. In terms of assembly, homotetramer; dimer of dimers. Mg(2+) serves as cofactor. K(+) is required as a cofactor.

The protein localises to the cytoplasm. It carries out the reaction L-methionine + ATP + H2O = S-adenosyl-L-methionine + phosphate + diphosphate. The protein operates within amino-acid biosynthesis; S-adenosyl-L-methionine biosynthesis; S-adenosyl-L-methionine from L-methionine: step 1/1. Its function is as follows. Catalyzes the formation of S-adenosylmethionine (AdoMet) from methionine and ATP. The overall synthetic reaction is composed of two sequential steps, AdoMet formation and the subsequent tripolyphosphate hydrolysis which occurs prior to release of AdoMet from the enzyme. The polypeptide is S-adenosylmethionine synthase (Synechococcus sp. (strain JA-3-3Ab) (Cyanobacteria bacterium Yellowstone A-Prime)).